The chain runs to 118 residues: Ferredoxin-thioredoxin reductase, catalytic chain (118 aa).

Cys-57 is a [4Fe-4S] cluster binding site. Cys-59 serves as the catalytic Nucleophile. A disulfide bond links Cys-59 and Cys-89. Cys-76, Cys-78, and Cys-87 together coordinate [4Fe-4S] cluster.

This sequence belongs to the ferredoxin thioredoxin reductase beta subunit family. As to quaternary structure, heterodimer of subunit A (variable subunit) and subunit B (catalytic subunit). Heterodimeric FTR forms a complex with ferredoxin and thioredoxin. [4Fe-4S] cluster serves as cofactor.

It localises to the plastid. The protein resides in the chloroplast. The catalysed reaction is [thioredoxin]-disulfide + 2 reduced [2Fe-2S]-[ferredoxin] + 2 H(+) = [thioredoxin]-dithiol + 2 oxidized [2Fe-2S]-[ferredoxin]. Functionally, catalytic subunit of the ferredoxin-thioredoxin reductase (FTR), which catalyzes the two-electron reduction of thioredoxins by the electrons provided by reduced ferredoxin. The protein is Ferredoxin-thioredoxin reductase, catalytic chain (ftrB) of Porphyra purpurea (Red seaweed).